The primary structure comprises 328 residues: H-2 class I histocompatibility antigen, K-Q alpha chain (328 aa).

Residues 1 to 71 form an alpha-1 region; sequence PRFISVGYVD…LLRYYNQSAG (71 aa). The Extracellular segment spans residues 1–265; that stretch reads PRFISVGYVD…EPPPSAVSNT (265 aa). The N-linked (GlcNAc...) asparagine glycan is linked to Asn-67. An alpha-2 region spans residues 72–163; it reads GSHTIQRMYG…KNGNATLLRT (92 aa). Cys-82 and Cys-145 are disulfide-bonded. N-linked (GlcNAc...) asparagine glycosylation occurs at Asn-157. The alpha-3 stretch occupies residues 164-255; that stretch reads DSPKAHVTHH…GLPKPLTLRW (92 aa). The region spanning 166–252 is the Ig-like C1-type domain; the sequence is PKAHVTHHSR…YHQGLPKPLT (87 aa). Cys-184 and Cys-240 are oxidised to a cystine. The interval 256–265 is connecting peptide; that stretch reads EPPPSAVSNT. Residues 266 to 289 traverse the membrane as a helical segment; that stretch reads VIIAVLVVLGAAIVTGAVVAFVMM. At 290–328 the chain is on the cytoplasmic side; sequence RRRNTGGKGGDYALAPGSQTSDLSLPDCKVMVHDPHSLA. Residues Ser-310 and Ser-313 each carry the phosphoserine modification.

It belongs to the MHC class I family. As to quaternary structure, heterodimer of an alpha chain and a beta chain (beta-2-microglobulin).

The protein localises to the membrane. Its function is as follows. Involved in the presentation of foreign antigens to the immune system. This chain is H-2 class I histocompatibility antigen, K-Q alpha chain (H2-K1), found in Mus musculus (Mouse).